The following is a 562-amino-acid chain: Arginine--tRNA ligase (562 aa).

Residues 129 to 139 (ANPTGPLHVGH) carry the 'HIGH' region motif.

This sequence belongs to the class-I aminoacyl-tRNA synthetase family. Monomer.

The protein localises to the cytoplasm. The catalysed reaction is tRNA(Arg) + L-arginine + ATP = L-arginyl-tRNA(Arg) + AMP + diphosphate. The polypeptide is Arginine--tRNA ligase (argS) (Xylella fastidiosa (strain 9a5c)).